Reading from the N-terminus, the 110-residue chain is Histone H2A.1 (110 aa).

The protein belongs to the histone H2A family. In terms of assembly, the nucleosome is a histone octamer containing two molecules each of H2A, H2B, H3 and H4 assembled in one H3-H4 heterotetramer and two H2A-H2B heterodimers. The octamer wraps approximately 147 bp of DNA. Expressed in the generative cell within the bicellular pollen. Not detected in other reproductive or vegetative tissues.

Its subcellular location is the nucleus. The protein resides in the chromosome. Functionally, core component of nucleosome. Nucleosomes wrap and compact DNA into chromatin, limiting DNA accessibility to the cellular machineries which require DNA as a template. Histones thereby play a central role in transcription regulation, DNA repair, DNA replication and chromosomal stability. DNA accessibility is regulated via a complex set of post-translational modifications of histones, also called histone code, and nucleosome remodeling. This chain is Histone H2A.1 (gcH2A), found in Lilium longiflorum (Trumpet lily).